A 660-amino-acid polypeptide reads, in one-letter code: DNA mismatch repair protein MutL (660 aa).

Residues 414-433 (SSVKHASRPQNTFTETDHPN) are disordered.

The protein belongs to the DNA mismatch repair MutL/HexB family.

Functionally, this protein is involved in the repair of mismatches in DNA. It is required for dam-dependent methyl-directed DNA mismatch repair. May act as a 'molecular matchmaker', a protein that promotes the formation of a stable complex between two or more DNA-binding proteins in an ATP-dependent manner without itself being part of a final effector complex. This chain is DNA mismatch repair protein MutL, found in Streptococcus pyogenes serotype M5 (strain Manfredo).